Reading from the N-terminus, the 123-residue chain is Fluoride-specific ion channel FluC (123 aa).

4 helical membrane-spanning segments follow: residues 7–27, 39–59, 67–87, and 100–120; these read LLLI…SGIL, LVNS…FFGF, IFLG…SYET, and FMNV…GFIL. Gly75 and Ser78 together coordinate Na(+).

The protein belongs to the fluoride channel Fluc/FEX (TC 1.A.43) family.

Its subcellular location is the cell membrane. It catalyses the reaction fluoride(in) = fluoride(out). With respect to regulation, na(+) is not transported, but it plays an essential structural role and its presence is essential for fluoride channel function. Fluoride-specific ion channel. Important for reducing fluoride concentration in the cell, thus reducing its toxicity. This chain is Fluoride-specific ion channel FluC, found in Pyrococcus abyssi (strain GE5 / Orsay).